The primary structure comprises 452 residues: Mitochondrial import inner membrane translocase subunit TIM44 (452 aa).

Position 128 is a phosphothreonine (Thr-128). 166-173 (SGEKLGKT) provides a ligand contact to ATP. Lys-177 bears the N6-succinyllysine mark. A Phosphoserine modification is found at Ser-180. At Lys-217 the chain carries N6-succinyllysine.

The protein belongs to the Tim44 family. In terms of assembly, probable component of the PAM complex at least composed of a mitochondrial HSP70 protein, GRPEL1 or GRPEL2, TIMM44, TIMM16/PAM16 and TIMM14/DNAJC19. The complex interacts with the TIMM23 component of the TIM23 complex. Interacts with SLC25A4/ANT1 and SLC25A5/ANT2; leading to inhibit the presequence translocase TIMM23, thereby promoting stabilization of PINK1.

It is found in the mitochondrion inner membrane. Functionally, essential component of the PAM complex, a complex required for the translocation of transit peptide-containing proteins from the inner membrane into the mitochondrial matrix in an ATP-dependent manner. Recruits mitochondrial HSP70 to drive protein translocation into the matrix using ATP as an energy source. In Mus musculus (Mouse), this protein is Mitochondrial import inner membrane translocase subunit TIM44 (Timm44).